We begin with the raw amino-acid sequence, 1533 residues long: Actin cytoskeleton-regulatory complex protein pan-1 (1533 aa).

The segment at 1–204 (MYSNSNAFLG…PPPPVKPQAT (204 aa)) is disordered. 4 stretches are compositionally biased toward low complexity: residues 19–46 (QQPQ…QPTG), 53–136 (GFAP…FQTG), 143–170 (IPQQ…QPQP), and 177–193 (QIQA…QGGI). The region spanning 244–333 (DQARFETLFK…DHIKNEVSSM (90 aa)) is the EH 1 domain. Residues 277 to 312 (LDGDSLSQIWTLADTTRSGQLHFPEFALAMYLCNLK) form the EF-hand 1 domain. The span at 345 to 359 (AGSSSAPASNAPSFA) shows a compositional bias: low complexity. Disordered regions lie at residues 345-378 (AGSS…PQPS) and 393-423 (QQTG…GYAG). 2 stretches are compositionally biased toward polar residues: residues 360–378 (TQQN…PQPS) and 393–410 (QQTG…QQTG). An EH 2 domain is found at 513–602 (EKTRYDALFR…PELVPPSARN (90 aa)). Residues 546-581 (LDKPDLERIWTLADNGNKGRLDLDEFAVAMHLIYRK) form the EF-hand 2 domain. Basic and acidic residues predominate over residues 649–664 (NRKDATVFKNNDEEVG). Disordered regions lie at residues 649 to 691 (NRKD…GDDL), 894 to 917 (IEDS…WEDA), 935 to 1306 (SRAA…STNP), and 1334 to 1533 (DAIS…RVLD). Residues 690 to 890 (DLTIEQLRKK…RDVEDSVREF (201 aa)) adopt a coiled-coil conformation. 2 stretches are compositionally biased toward basic and acidic residues: residues 894 to 916 (IEDS…RWED) and 935 to 947 (SRAA…DRQG). A compositionally biased stretch (low complexity) spans 968–982 (TPSPSISRTSTPAST). Positions 1026 to 1209 (ETAAQRAERE…KQLEAIDDED (184 aa)) form a coiled coil. 3 stretches are compositionally biased toward basic and acidic residues: residues 1031–1063 (RAER…KLAE), 1090–1164 (GKAD…EEEK), and 1173–1203 (EAKE…KQLE). The segment covering 1204–1218 (AIDDEDSSSSDEEGP) has biased composition (acidic residues). The span at 1221 to 1237 (ITPQASTPTVGGSQVGT) shows a compositional bias: polar residues. Over residues 1279–1293 (SQSSEASTSSVAAPV) the composition is skewed to low complexity. Over residues 1348 to 1367 (DDDDDDWGSEKGSDDEDSDD) the composition is skewed to acidic residues. Pro residues predominate over residues 1412 to 1495 (SSPPPPPAPV…PPPGGAPAPS (84 aa)). The WH2 domain maps to 1500 to 1517 (RPAGLLGEIQAGRALKKT).

Belongs to the PAN1 family. Component of the PAN1 actin cytoskeleton-regulatory complex.

It is found in the cell membrane. Its subcellular location is the endosome membrane. The protein localises to the cytoplasm. The protein resides in the cytoskeleton. It localises to the actin patch. Component of the PAN1 actin cytoskeleton-regulatory complex required for the internalization of endosomes during actin-coupled endocytosis. The complex links the site of endocytosis to the cell membrane-associated actin cytoskeleton. Mediates uptake of external molecules and vacuolar degradation of plasma membrane proteins. Plays a role in the proper organization of the cell membrane-associated actin cytoskeleton and promotes its destabilization. The sequence is that of Actin cytoskeleton-regulatory complex protein pan-1 (pan-1) from Neurospora crassa (strain ATCC 24698 / 74-OR23-1A / CBS 708.71 / DSM 1257 / FGSC 987).